A 237-amino-acid polypeptide reads, in one-letter code: tRNA (guanine-N(7)-)-methyltransferase (237 aa).

Positions 1–24 are disordered; the sequence is MTAHKPGDPTTLNRLYGRSKGKPL. S-adenosyl-L-methionine is bound by residues Glu62, Glu87, Asp119, and Asp141. Asp141 is an active-site residue. Substrate contacts are provided by residues Lys145, Asp177, and 216 to 219; that span reads TRYE.

This sequence belongs to the class I-like SAM-binding methyltransferase superfamily. TrmB family.

The catalysed reaction is guanosine(46) in tRNA + S-adenosyl-L-methionine = N(7)-methylguanosine(46) in tRNA + S-adenosyl-L-homocysteine. It functions in the pathway tRNA modification; N(7)-methylguanine-tRNA biosynthesis. In terms of biological role, catalyzes the formation of N(7)-methylguanine at position 46 (m7G46) in tRNA. The protein is tRNA (guanine-N(7)-)-methyltransferase of Sphingopyxis alaskensis (strain DSM 13593 / LMG 18877 / RB2256) (Sphingomonas alaskensis).